Reading from the N-terminus, the 99-residue chain is MIKLSAVILSIGLLVGCSTKPLEVKKETVHPNWPVQIKSYDEAKLSWQVKVIDGKAWVGMPFEDSQEFRIWLNDVKRYVHDQKTMXCYYRQELKEDKCK.

Residues 1-16 form the signal peptide; sequence MIKLSAVILSIGLLVG. A lipid anchor (N-palmitoyl cysteine; by host) is attached at C17. The S-diacylglycerol cysteine; by host moiety is linked to residue C17. At 18–99 the chain is on the periplasmic side; sequence STKPLEVKKE…RQELKEDKCK (82 aa).

Interacts (via C-terminus) with the spanin inner membrane subunit (via C-terminus). Part of the spanin complex which spans the entire periplasmic space. The spanin complex is composed of spanin inner membrane subunit and spanin outer membrane subunit.

It localises to the host cell outer membrane. In terms of biological role, component of the spanin complex that disrupts the host outer membrane and participates in cell lysis during virus exit. The spanin complex conducts the final step in host lysis by disrupting the outer membrane after holin and endolysin action have permeabilized the inner membrane and degraded the host peptidoglycans. Host outer membrane disruption is possibly due to local fusion between the inner and outer membrane performed by the spanin complex. This Escherichia coli (Bacteriophage T4) protein is Spanin, outer lipoprotein subunit (y13J).